The sequence spans 958 residues: UPF0182 protein TW644 (958 aa).

Transmembrane regions (helical) follow at residues I14–V34, I59–F79, K107–S127, L166–V186, V205–N225, L249–I269, and I280–G300.

Belongs to the UPF0182 family.

It is found in the cell membrane. The polypeptide is UPF0182 protein TW644 (Tropheryma whipplei (strain TW08/27) (Whipple's bacillus)).